A 90-amino-acid polypeptide reads, in one-letter code: Probable Fe(2+)-trafficking protein (90 aa).

It belongs to the Fe(2+)-trafficking protein family.

Could be a mediator in iron transactions between iron acquisition and iron-requiring processes, such as synthesis and/or repair of Fe-S clusters in biosynthetic enzymes. The chain is Probable Fe(2+)-trafficking protein from Cupriavidus necator (strain ATCC 17699 / DSM 428 / KCTC 22496 / NCIMB 10442 / H16 / Stanier 337) (Ralstonia eutropha).